Here is a 113-residue protein sequence, read N- to C-terminus: Endoribonuclease SymE (113 aa).

In terms of domain architecture, SpoVT-AbrB spans 29 to 74 (GRYPDYSRIPAITLKGQWLEVAGFATGTAVDVKVMEGCIVLTAQPP).

It belongs to the SymE family.

It is found in the cytoplasm. Its function is as follows. Involved in the degradation and recycling of damaged RNA. It is itself a target for degradation by the ATP-dependent protease Lon. The chain is Endoribonuclease SymE from Escherichia coli O7:K1 (strain IAI39 / ExPEC).